The primary structure comprises 237 residues: MILGDDECNINEHRFLVALYTSRTLFCGGTLINQEWVLTAAHCNMEDIQIKLGMHSKKVPNEDEQKRVPKEKFFCLSSKNYTLWDKDIMLIRLDSPVKNSAHIAPLSLPSSPPSVGSVCRTIGWGRISSTKETYPDVPHCVNINLLEYEMCRAPYPEFELPATSRTLCAGILEGGKDTCVGDSGGPLICNGQFQGIASWGDDPCAQPHKPAAYTKVFDHLDWIENIIAGNTDASCPP.

Methionine 1 is a propeptide. Residues 2–228 (ILGDDECNIN…HLDWIENIIA (227 aa)) form the Peptidase S1 domain. Cysteine 27 and cysteine 43 form a disulfide bridge. The Charge relay system role is filled by histidine 42. The N-linked (GlcNAc...) asparagine glycan is linked to asparagine 80. Aspartate 87 functions as the Charge relay system in the catalytic mechanism. 3 disulfides stabilise this stretch: cysteine 119-cysteine 189, cysteine 151-cysteine 168, and cysteine 179-cysteine 204. Residue serine 183 is the Charge relay system of the active site.

It belongs to the peptidase S1 family. Snake venom subfamily. In terms of tissue distribution, expressed by the venom gland.

Its subcellular location is the secreted. Its activity is regulated as follows. The hydrolysis of TAMe (tosyl-arginine methyl ester) substrate is activated by Ca(2+), Fe(3+), Mg(2+) and Zn(2+), and inhibited by EDTA, PMSF and DTT. Functionally, thrombin-like enzyme that shows fibrinogenolytic activity against bovine fibrinogen alpha and beta chains, but not gamma chain. Hydrolyzes fibrin. Enhances ADP-induced human platelet aggregation. Has arginine esterase activity for TAMe (tosyl-arginine methyl ester) substrate. Reduces thrombin-induced thrombosis. Does not have hemorrhagic activity. Reduces the motility of human liver cancer HepG2 cells in a wound-healing assay. In Gloydius halys (Chinese water mocassin), this protein is Thrombin-like enzyme agkihpin-1.